A 554-amino-acid polypeptide reads, in one-letter code: Valerianol synthase TPS1C (554 aa).

Positions 307 and 311 each coordinate Mg(2+). A DDXXD motif motif is present at residues 326–330 (VQRWD). Mg(2+) contacts are provided by D452, S456, and E460.

The protein belongs to the terpene synthase family. It depends on Mg(2+) as a cofactor.

The catalysed reaction is (2E,6E)-farnesyl diphosphate + H2O = valerianol + diphosphate. It participates in secondary metabolite biosynthesis; terpenoid biosynthesis. Functionally, terpene synthase that catalyzes the biosynthesis of the terpene valerianol, which is a volatile compound of floral scent. In Camellia hiemalis (Camellia), this protein is Valerianol synthase TPS1C.